The following is a 144-amino-acid chain: MRLNTLSPAQGAKQAPKRVGRGIGSGLGKTGGRGHKGQNSRTGGGVRRGFEGGQMPLYRRLPKFGFISRKAMVTAEVRLFQLALLETDVVDINILKACKIIPYQSQYAKIILSGTIEIPVIIRGLGVTKGARAAIEAAGGKIEE.

The interval 1–53 is disordered; that stretch reads MRLNTLSPAQGAKQAPKRVGRGIGSGLGKTGGRGHKGQNSRTGGGVRRGFEGG. The span at 21-31 shows a compositional bias: gly residues; sequence RGIGSGLGKTG.

Belongs to the universal ribosomal protein uL15 family. As to quaternary structure, part of the 50S ribosomal subunit.

In terms of biological role, binds to the 23S rRNA. The polypeptide is Large ribosomal subunit protein uL15 (Hamiltonella defensa subsp. Acyrthosiphon pisum (strain 5AT)).